Here is a 382-residue protein sequence, read N- to C-terminus: Galactokinase (382 aa).

Residue 34 to 37 (EHTD) participates in substrate binding. 124–130 (GAGLSSS) provides a ligand contact to ATP. The Mg(2+) site is built by Ser130 and Glu162. Asp174 serves as the catalytic Proton acceptor. Tyr223 lines the substrate pocket.

It belongs to the GHMP kinase family. GalK subfamily.

It localises to the cytoplasm. It catalyses the reaction alpha-D-galactose + ATP = alpha-D-galactose 1-phosphate + ADP + H(+). The protein operates within carbohydrate metabolism; galactose metabolism. Its function is as follows. Catalyzes the transfer of the gamma-phosphate of ATP to D-galactose to form alpha-D-galactose-1-phosphate (Gal-1-P). The chain is Galactokinase from Salmonella typhi.